Reading from the N-terminus, the 843-residue chain is Protein P (843 aa).

The segment at Met1 to Gln177 is terminal protein domain (TP). The spacer stretch occupies residues Glu178–Leu346. Residues Glu347–Gln690 form a polymerase/reverse transcriptase domain (RT) region. The region spanning Glu357–Ile600 is the Reverse transcriptase domain. The Mg(2+) site is built by Asp429, Asp551, and Asp552.

The protein belongs to the hepadnaviridae P protein family.

It catalyses the reaction DNA(n) + a 2'-deoxyribonucleoside 5'-triphosphate = DNA(n+1) + diphosphate. The enzyme catalyses Endonucleolytic cleavage to 5'-phosphomonoester.. Activated by host HSP70 and HSP40 in vitro to be able to bind the epsilon loop of the pgRNA. Because deletion of the RNase H region renders the protein partly chaperone-independent, the chaperones may be needed indirectly to relieve occlusion of the RNA-binding site by this domain. Inhibited by several reverse-transcriptase inhibitors: Lamivudine, Adefovir and Entecavir. Multifunctional enzyme that converts the viral RNA genome into dsDNA in viral cytoplasmic capsids. This enzyme displays a DNA polymerase activity that can copy either DNA or RNA templates, and a ribonuclease H (RNase H) activity that cleaves the RNA strand of RNA-DNA heteroduplexes in a partially processive 3'- to 5'-endonucleasic mode. Neo-synthesized pregenomic RNA (pgRNA) are encapsidated together with the P protein, and reverse-transcribed inside the nucleocapsid. Initiation of reverse-transcription occurs first by binding the epsilon loop on the pgRNA genome, and is initiated by protein priming, thereby the 5'-end of (-)DNA is covalently linked to P protein. Partial (+)DNA is synthesized from the (-)DNA template and generates the relaxed circular DNA (RC-DNA) genome. After budding and infection, the RC-DNA migrates in the nucleus, and is converted into a plasmid-like covalently closed circular DNA (cccDNA). The activity of P protein does not seem to be necessary for cccDNA generation, and is presumably released from (+)DNA by host nuclear DNA repair machinery. The chain is Protein P from Hepatitis B virus genotype C subtype adr (isolate Japan/Nishioka/1983) (HBV-C).